The sequence spans 374 residues: tRNA-specific 2-thiouridylase MnmA (374 aa).

Residues 12–19 (GMSGGVDS) and Met38 each bind ATP. The interval 98–100 (NPD) is interaction with target base in tRNA. Catalysis depends on Cys103, which acts as the Nucleophile. A disulfide bridge links Cys103 with Cys202. Gly128 provides a ligand contact to ATP. Residues 152 to 154 (KDQ) form an interaction with tRNA region. The Cysteine persulfide intermediate role is filled by Cys202. The segment at 316–317 (RY) is interaction with tRNA.

Belongs to the MnmA/TRMU family.

The protein localises to the cytoplasm. It catalyses the reaction S-sulfanyl-L-cysteinyl-[protein] + uridine(34) in tRNA + AH2 + ATP = 2-thiouridine(34) in tRNA + L-cysteinyl-[protein] + A + AMP + diphosphate + H(+). Its function is as follows. Catalyzes the 2-thiolation of uridine at the wobble position (U34) of tRNA, leading to the formation of s(2)U34. The chain is tRNA-specific 2-thiouridylase MnmA from Vibrio parahaemolyticus serotype O3:K6 (strain RIMD 2210633).